The chain runs to 575 residues: Malto-oligosyltrehalose trehalohydrolase (575 aa).

Residue 248 to 253 (RLDAVH) participates in substrate binding. Asp250 functions as the Nucleophile in the catalytic mechanism. Glu287 serves as the catalytic Proton donor. Substrate-binding positions include 312-316 (DDVHH) and 381-386 (HDQVGN).

Belongs to the glycosyl hydrolase 13 family.

It is found in the cytoplasm. It carries out the reaction hydrolysis of (1-&gt;4)-alpha-D-glucosidic linkage in 4-alpha-D-[(1-&gt;4)-alpha-D-glucanosyl]n trehalose to yield trehalose and (1-&gt;4)-alpha-D-glucan.. The protein operates within glycan biosynthesis; trehalose biosynthesis. This chain is Malto-oligosyltrehalose trehalohydrolase (treZ), found in Arthrobacter ramosus.